The primary structure comprises 224 residues: Zinc finger protein 22 (224 aa).

Residues 1-34 (MRLAKPKAGISRSSSQGKAYENKRKTGRQRQKWG) form a disordered region. Residues Lys-18 and Lys-23 each carry the N6-acetyllysine modification. Ser-49 carries the post-translational modification Phosphoserine. C2H2-type zinc fingers lie at residues 55-77 (YKCT…QKIH), 83-105 (HKCA…RRIH), 111-133 (YKCD…QRIH), 139-161 (YQCD…QRTH), and 167-189 (YQCS…MKVH).

Belongs to the krueppel C2H2-type zinc-finger protein family. In the embryo, expressed in developing craniofacial structures including dental epithelium of maxillary molar tooth organs, tongue epithelium and muscle, and craniofacial bone osteoblasts. In the adult, expressed in mesoderm-derived tissues such as skeletal muscle, heart, kidney and liver. Intermediate expression in spleen, thymus and brain. Low levels in endoderm-derived tissues such as intestine and colon.

The protein resides in the nucleus. Functionally, binds DNA through the consensus sequence 5'-CAATG-3'. May be involved in transcriptional regulation and may play a role in tooth formation. In Homo sapiens (Human), this protein is Zinc finger protein 22 (ZNF22).